The following is a 578-amino-acid chain: Thrombomodulin (578 aa).

The signal sequence occupies residues 1–16; sequence MLRVLLLGVLAPAGLG. Topologically, residues 17 to 518 are extracellular; the sequence is LPTPAQPQPR…SPSPVGPVHS (502 aa). The C-type lectin domain occupies 31-167; sequence MEHDCFQLFR…CAAEADGFLC (137 aa). Asparagine 114 carries an N-linked (GlcNAc...) asparagine glycan. 19 disulfide bridges follow: cysteine 137/cysteine 158, cysteine 246/cysteine 257, cysteine 253/cysteine 266, cysteine 268/cysteine 281, cysteine 289/cysteine 297, cysteine 293/cysteine 309, cysteine 311/cysteine 324, cysteine 330/cysteine 341, cysteine 337/cysteine 350, cysteine 352/cysteine 363, cysteine 370/cysteine 379, cysteine 375/cysteine 389, cysteine 391/cysteine 405, cysteine 409/cysteine 414, cysteine 418/cysteine 426, cysteine 428/cysteine 440, cysteine 446/cysteine 455, cysteine 451/cysteine 464, and cysteine 466/cysteine 480. EGF-like domains follow at residues 242-282 and 285-325; these read GAWD…RSCA and AEHS…HRCE. Asparagine 300 carries an N-linked (GlcNAc...) asparagine glycan. In terms of domain architecture, EGF-like 3; calcium-binding spans 326-364; the sequence is DVDDCIQVPSLCPQLCVNTRGAFECHCYPGYELVDNECV. (3R)-3-hydroxyasparagine is present on asparagine 343. EGF-like domains are found at residues 366-406 and 405-441; these read PVDP…HRCQ and CQMF…FMCT. Asparagine 410 is a glycosylation site (N-linked (GlcNAc...) asparagine). Residues 442–481 form the EGF-like 6; calcium-binding domain; it reads DIDECENGECPEACRNLPGTYECICGPDSPLAGQVATDCG. A disordered region spans residues 483 to 512; that stretch reads IISDPDGDSDSGSGEPPVTPTPGVTPSPSP. O-linked (Xyl...) (chondroitin sulfate) serine glycans are attached at residues serine 493 and serine 495. Residues 499-512 are compositionally biased toward pro residues; the sequence is PVTPTPGVTPSPSP. Residues 519–539 traverse the membrane as a helical segment; it reads GVLIGISIASLSLVVALLALL. Topologically, residues 540 to 578 are cytoplasmic; the sequence is CHLRKKQGAPRAELEYKCGAPAKEVVLQHVRTEQMPQKL.

As to quaternary structure, interacts with ITGAL, ITGAM and ITGB2. Interacts with thrombin/F2; this interaction switches the specificity of thrombin from a procoagulant to an anticoagulant and antifibrinolytic protease. Interacts with ANGP1 and ANGP2; these interactions significantly inhibit the generation of activated PC and TAFIa/CPB2 by the thrombin/thrombomodulin complex. Interacts with PF4; this interaction enhances generation of activated protein C. Interacts with HMGB1; this interaction inhibits HMGB1 inflammatory activity. In terms of processing, N-glycosylated. The iron and 2-oxoglutarate dependent 3-hydroxylation of aspartate and asparagine is (R) stereospecific within EGF domains. Expressed in lung, liver, spleen, kidney, pancreas and lymph node. Low expression in heart, cerebrum, urinary bladder and uterus.

It is found in the membrane. In terms of biological role, endothelial cell receptor that plays a critical role in regulating several physiological processes including hemostasis, coagulation, fibrinolysis, inflammation, and angiogenesis. Acts as a cofactor for thrombin activation of protein C/PROC on the surface of vascular endothelial cells leading to initiation of the activated protein C anticoagulant pathway. Also accelerates the activation of the plasma carboxypeptidase B2/CPB2, which catalyzes removal of C-terminal basic amino acids from its substrates including kinins or anaphylatoxins leading to fibrinolysis inhibition. Plays critical protective roles in changing the cleavage specificity of protease-activated receptor 1/PAR1, inhibiting endothelial cell permeability and inflammation. Suppresses inflammation distinctly from its anticoagulant cofactor activity by sequestering HMGB1 thereby preventing it from engaging cellular receptors such as RAGE and contributing to the inflammatory response. The sequence is that of Thrombomodulin (THBD) from Canis lupus familiaris (Dog).